The following is a 137-amino-acid chain: MSKVAQQLKFLNKISATTRLPQILVDPKKYSGLRLTFQTKNHNGHMGARVFWHNYLPTLQFYNPRMKFDVIRIKNEDKQKSVPCKLEILSHEGSVVETIDMRNKMHEDIMKDLLDKIEHVPLPENEIIRVGPQESII.

Belongs to the mitochondrion-specific ribosomal protein mL61 family. Component of the mitochondrial large ribosomal subunit (mt-LSU). Mature yeast 74S mitochondrial ribosomes consist of a small (37S) and a large (54S) subunit. The 37S small subunit contains a 15S ribosomal RNA (15S mt-rRNA) and 34 different proteins. The 54S large subunit contains a 21S rRNA (21S mt-rRNA) and 46 different proteins.

The protein localises to the mitochondrion. Functionally, component of the mitochondrial ribosome (mitoribosome), a dedicated translation machinery responsible for the synthesis of mitochondrial genome-encoded proteins, including at least some of the essential transmembrane subunits of the mitochondrial respiratory chain. The mitoribosomes are attached to the mitochondrial inner membrane and translation products are cotranslationally integrated into the membrane. mL61 is not essential in cells grown at 30 degrees Celsius but is required for mitochondrial translation in cells grown at 18 degrees Celsius. The sequence is that of Large ribosomal subunit protein mL61 (MRP49) from Saccharomyces cerevisiae (strain ATCC 204508 / S288c) (Baker's yeast).